Consider the following 324-residue polypeptide: tRNA uridine(34) hydroxylase (324 aa).

Positions 122–218 constitute a Rhodanese domain; it reads QENRCLILDV…YGQQVGTGKW (97 aa). C178 acts as the Cysteine persulfide intermediate in catalysis.

It belongs to the TrhO family.

It catalyses the reaction uridine(34) in tRNA + AH2 + O2 = 5-hydroxyuridine(34) in tRNA + A + H2O. Its function is as follows. Catalyzes oxygen-dependent 5-hydroxyuridine (ho5U) modification at position 34 in tRNAs. In Chlamydia pneumoniae (Chlamydophila pneumoniae), this protein is tRNA uridine(34) hydroxylase.